Here is a 302-residue protein sequence, read N- to C-terminus: uncharacterized protein (302 aa).

In terms of biological role, may be a membrane-bound protein, possibly involved in IAA or IAA-Lysine transport. This is an uncharacterized protein from Pseudomonas savastanoi (Pseudomonas syringae pv. savastanoi).